The following is a 255-amino-acid chain: MKTIAVNSFKGGTAKTSTTLHLGAALAQYHKARVLLIDFDAQANLTAGLGLDPDCYDSLAVVLQGEKQISEVIRSIDSSGLDLIPADTWLERVEVSGSLAADRYSHERLKTILSTIEHQYDYVIIDTPPSLCWLTESALIAAQHALICATPEFYSVKGLERLATFIQGISSRHPLNILGVTLSFWNYRGKNNAAFTELIQKTFPGKLLNTRIRRDITISEAAIHGKPVFSTAPSARASEDYLKLTEELLFLLRDI.

The protein belongs to the ParA family.

The protein is ParA family protein TC_0871 of Chlamydia muridarum (strain MoPn / Nigg).